The primary structure comprises 348 residues: Holliday junction branch migration complex subunit RuvB (348 aa).

The large ATPase domain (RuvB-L) stretch occupies residues 1 to 182 (MRIELLNTPA…FGINSRFDYY (182 aa)). Residues isoleucine 21, arginine 22, glycine 63, lysine 66, threonine 67, threonine 68, 129 to 131 (EDF), arginine 172, tyrosine 182, and arginine 219 each bind ATP. Position 67 (threonine 67) interacts with Mg(2+). Positions 183 to 253 (SADLLEKIII…IAMTTLDCLE (71 aa)) are small ATPAse domain (RuvB-S). The head domain (RuvB-H) stretch occupies residues 256–348 (EEGLDDMDKK…EFPLEDDQRQ (93 aa)). DNA is bound by residues arginine 311 and arginine 316.

The protein belongs to the RuvB family. In terms of assembly, homohexamer. Forms an RuvA(8)-RuvB(12)-Holliday junction (HJ) complex. HJ DNA is sandwiched between 2 RuvA tetramers; dsDNA enters through RuvA and exits via RuvB. An RuvB hexamer assembles on each DNA strand where it exits the tetramer. Each RuvB hexamer is contacted by two RuvA subunits (via domain III) on 2 adjacent RuvB subunits; this complex drives branch migration. In the full resolvosome a probable DNA-RuvA(4)-RuvB(12)-RuvC(2) complex forms which resolves the HJ.

It is found in the cytoplasm. It catalyses the reaction ATP + H2O = ADP + phosphate + H(+). Functionally, the RuvA-RuvB-RuvC complex processes Holliday junction (HJ) DNA during genetic recombination and DNA repair, while the RuvA-RuvB complex plays an important role in the rescue of blocked DNA replication forks via replication fork reversal (RFR). RuvA specifically binds to HJ cruciform DNA, conferring on it an open structure. The RuvB hexamer acts as an ATP-dependent pump, pulling dsDNA into and through the RuvAB complex. RuvB forms 2 homohexamers on either side of HJ DNA bound by 1 or 2 RuvA tetramers; 4 subunits per hexamer contact DNA at a time. Coordinated motions by a converter formed by DNA-disengaged RuvB subunits stimulates ATP hydrolysis and nucleotide exchange. Immobilization of the converter enables RuvB to convert the ATP-contained energy into a lever motion, pulling 2 nucleotides of DNA out of the RuvA tetramer per ATP hydrolyzed, thus driving DNA branch migration. The RuvB motors rotate together with the DNA substrate, which together with the progressing nucleotide cycle form the mechanistic basis for DNA recombination by continuous HJ branch migration. Branch migration allows RuvC to scan DNA until it finds its consensus sequence, where it cleaves and resolves cruciform DNA. In Chlorobium limicola (strain DSM 245 / NBRC 103803 / 6330), this protein is Holliday junction branch migration complex subunit RuvB.